Reading from the N-terminus, the 421-residue chain is Transcription factor IIIB 50 kDa subunit (421 aa).

The TFIIB-type zinc-finger motif lies at 2-36; the sequence is PGRGRCPDCGSAELVEDSHYSQNQLVCSDCGCVVT. Zn(2+) contacts are provided by cysteine 7, cysteine 10, cysteine 28, and cysteine 31. 2 tandem repeats follow at residues 72 to 157 and 173 to 249. The segment at 108–114 is interaction with target DNA; sequence TARLQKK. The disordered stretch occupies residues 325 to 357; the sequence is ELQGQGQGQGLGDEDVGSSSLELPAGKRPSSPA. Serine 355 carries the phosphoserine modification. The tract at residues 359–365 is required for the formation of a ternary complex with DNA and TBP; not required for interaction with TBP in the absence of DNA; the sequence is LLPPCML. Position 363 is a cysteine sulfenic acid (-SOH) (cysteine 363). The segment at 367 to 421 is required for interaction with TBP and formation of a ternary complex with DNA and TBP; that stretch reads PPKRVCPAPPVSMVTGDEDISDSEIEQYLRTPQEVRDFQKAQAARQAAQGTPNPP.

It belongs to the TFIIB family. Component of TFIIIB complexes. The TFIIIB complex has two activities, alpha and beta. The TFIIIB-alpha activity complex is composed of TBP, BDP1, and a complex containing both BRF2 and at least four stably associated proteins; this complex inhibits the transcription by pol III via its phosphorylation by CK2; YY1 facilitates the TFIIIB-alpha complex formation. Interacts with TBP; this interaction promotes recruitment of BRF2 to TATA box-containing promoters. Interacts with TBP and the BURE sequence (GC-rich sequence downstream from the TATA box) to form a strong ternary complex which is joined by BDP1; this ternary complex stimulates pol III transcription. Forms a trimeric complex composed of TBP, BRF2 and mini-SNAPc complex (SNAP43, SNAP50, and the N-terminal third of SNAP190) on the promoter. Assembly of the TBP-BRF2 complex is stimulated by SNAP190. Interacts with MAF1 and SNAPC4. In terms of processing, in response to oxidative stress, Cys-363 is reversibly oxidized to cysteine sulfenic acid. Oxidation of Cys-363 impairs formation of a ternary complex with TBP and DNA and down-regulates expression of target genes in response to oxidative stress.

The protein localises to the nucleus. General activator of RNA polymerase III transcription. Factor exclusively required for RNA polymerase III transcription of genes with promoter elements upstream of the initiation sites. Contributes to the regulation of gene expression; functions as activator in the absence of oxidative stress. Down-regulates expression of target genes in response to oxidative stress. Overexpression protects cells against apoptosis in response to oxidative stress. The protein is Transcription factor IIIB 50 kDa subunit (BRF2) of Bos taurus (Bovine).